The sequence spans 481 residues: Small ribosomal subunit protein bS1 (481 aa).

4 S1 motif domains span residues 36-105, 123-188, 209-277, and 294-363; these read GDIV…LSKK, DEAV…LSRR, GAIR…LSLK, and GQIV…LSLK. The interval 437-465 is disordered; that stretch reads ATEEAGHGSSEQPPASSTPSAKATGGSLA. The segment covering 445 to 457 has biased composition (polar residues); that stretch reads SSEQPPASSTPSA.

It belongs to the bacterial ribosomal protein bS1 family.

Binds mRNA; thus facilitating recognition of the initiation point. It is needed to translate mRNA with a short Shine-Dalgarno (SD) purine-rich sequence. The protein is Small ribosomal subunit protein bS1 (rpsA) of Mycobacterium leprae (strain TN).